The following is a 590-amino-acid chain: Negative elongation factor C/D (590 aa).

Residues 16–43 are disordered; sequence GSAAEWGDEADGGQQEDDSGEGEDDAEV. A compositionally biased stretch (acidic residues) spans 21-43; that stretch reads WGDEADGGQQEDDSGEGEDDAEV.

It belongs to the NELF-D family. As to quaternary structure, the NELF complex is composed of NELFA, NELFB, NELFCD (isoform NELF-C or isoform NELF-D) and NELFE; NELFA and NELFCD form a stable subcomplex that binds primarily through NELFCD to the N-terminus of NELFB. Binds RNA which may help to stabilize the NELF complex on nucleic acid. In vitro, the NELFA:NELFCD subcomplex binds to ssDNA and ssRNA in a sequence- and structure-dependent manner. Interacts with ARAF. Interacts with PCF11. Interacts with KAT8. In terms of tissue distribution, widely expressed. Expressed in heart, brain, lung, placenta, liver, skeletal and cardiac muscle, adrenal, thyroid, kidney and pancreas.

It localises to the nucleus. Functionally, essential component of the NELF complex, a complex that negatively regulates the elongation of transcription by RNA polymerase II. The NELF complex, which acts via an association with the DSIF complex and causes transcriptional pausing, is counteracted by the P-TEFb kinase complex. In terms of biological role, (Microbial infection) The NELF complex is involved in HIV-1 latency possibly involving recruitment of PCF11 to paused RNA polymerase II. The sequence is that of Negative elongation factor C/D (NELFCD) from Homo sapiens (Human).